An 814-amino-acid polypeptide reads, in one-letter code: Ubiquitin carboxyl-terminal hydrolase 45 (814 aa).

The segment covering 1 to 14 (MRVKDPTKALPEKA) has biased composition (basic and acidic residues). Positions 1–28 (MRVKDPTKALPEKAKRSKRPTVPHDEDS) are disordered. An interaction with ERCC1 region spans residues 1-62 (MRVKDPTKAL…AIAENLWSVC (62 aa)). Phosphoserine occurs at positions 28 and 29. A UBP-type zinc finger spans residues 36–153 (LTCQHVSHAI…AQIVDFLQKH (118 aa)). Residues cysteine 38, histidine 40, cysteine 62, cysteine 65, cysteine 85, cysteine 88, cysteine 93, histidine 101, histidine 105, histidine 114, cysteine 127, and cysteine 130 each coordinate Zn(2+). The 624-residue stretch at 190–813 (RGITNLGNTC…QAYLLFYERV (624 aa)) folds into the USP domain. The Nucleophile role is filled by cysteine 199. 2 disordered regions span residues 418-443 (IENI…IHDR) and 479-533 (ESRL…PDGP). Over residues 432-443 (SSKDKSQLIHDR) the composition is skewed to basic and acidic residues. Phosphoserine occurs at positions 508 and 526. A compositionally biased stretch (polar residues) spans 515–527 (KQTGLFRSSSGSG). Histidine 746 functions as the Proton acceptor in the catalytic mechanism.

This sequence belongs to the peptidase C19 family. In terms of assembly, interacts with ERCC1. The catalytically active form interacts with SPDL1. Widely expressed. High expression is detected in the cerebellum. In the eye, it is expressed at high levels in the optic nerve, sclera and retina, with relatively low levels in the choroid, lens and retinal pigment epithelium.

It is found in the photoreceptor inner segment. The protein resides in the cytoplasm. Its subcellular location is the nucleus. The enzyme catalyses Thiol-dependent hydrolysis of ester, thioester, amide, peptide and isopeptide bonds formed by the C-terminal Gly of ubiquitin (a 76-residue protein attached to proteins as an intracellular targeting signal).. Its function is as follows. Catalyzes the deubiquitination of SPDL1. Plays a role in the repair of UV-induced DNA damage via deubiquitination of ERCC1, promoting its recruitment to DNA damage sites. May be involved in the maintenance of photoreceptor function. May play a role in normal retinal development. Plays a role in cell migration. The polypeptide is Ubiquitin carboxyl-terminal hydrolase 45 (USP45) (Homo sapiens (Human)).